The chain runs to 119 residues: Large ribosomal subunit protein bL20 (119 aa).

It belongs to the bacterial ribosomal protein bL20 family.

Binds directly to 23S ribosomal RNA and is necessary for the in vitro assembly process of the 50S ribosomal subunit. It is not involved in the protein synthesizing functions of that subunit. The sequence is that of Large ribosomal subunit protein bL20 from Rhodopseudomonas palustris (strain HaA2).